A 267-amino-acid chain; its full sequence is Hydroxyethylthiazole kinase 2 (267 aa).

M41 serves as a coordination point for substrate. K116 and T166 together coordinate ATP. G193 contacts substrate.

It belongs to the Thz kinase family. Requires Mg(2+) as cofactor.

It carries out the reaction 5-(2-hydroxyethyl)-4-methylthiazole + ATP = 4-methyl-5-(2-phosphooxyethyl)-thiazole + ADP + H(+). Its pathway is cofactor biosynthesis; thiamine diphosphate biosynthesis; 4-methyl-5-(2-phosphoethyl)-thiazole from 5-(2-hydroxyethyl)-4-methylthiazole: step 1/1. Functionally, catalyzes the phosphorylation of the hydroxyl group of 4-methyl-5-beta-hydroxyethylthiazole (THZ). The polypeptide is Hydroxyethylthiazole kinase 2 (Streptococcus pneumoniae (strain P1031)).